Here is a 79-residue protein sequence, read N- to C-terminus: Sec-independent protein translocase protein TatA (79 aa).

A helical transmembrane segment spans residues 1-21 (MGSLSIWHWIVVIAVILLLFG). The span at 43-60 (MQDDEKTAEKPEPVKTID) shows a compositional bias: basic and acidic residues. Residues 43–79 (MQDDEKTAEKPEPVKTIDHNAPAPGASRSDVGSKTTV) are disordered.

The protein belongs to the TatA/E family. As to quaternary structure, the Tat system comprises two distinct complexes: a TatABC complex, containing multiple copies of TatA, TatB and TatC subunits, and a separate TatA complex, containing only TatA subunits. Substrates initially bind to the TatABC complex, which probably triggers association of the separate TatA complex to form the active translocon.

The protein localises to the cell inner membrane. Functionally, part of the twin-arginine translocation (Tat) system that transports large folded proteins containing a characteristic twin-arginine motif in their signal peptide across membranes. TatA could form the protein-conducting channel of the Tat system. This chain is Sec-independent protein translocase protein TatA, found in Nitrobacter hamburgensis (strain DSM 10229 / NCIMB 13809 / X14).